Here is an 84-residue protein sequence, read N- to C-terminus: Small ribosomal subunit protein uS17 (84 aa).

This sequence belongs to the universal ribosomal protein uS17 family. In terms of assembly, part of the 30S ribosomal subunit.

One of the primary rRNA binding proteins, it binds specifically to the 5'-end of 16S ribosomal RNA. The chain is Small ribosomal subunit protein uS17 from Proteus mirabilis (strain HI4320).